The primary structure comprises 115 residues: Large ribosomal subunit protein bL19 (115 aa).

This sequence belongs to the bacterial ribosomal protein bL19 family.

In terms of biological role, this protein is located at the 30S-50S ribosomal subunit interface and may play a role in the structure and function of the aminoacyl-tRNA binding site. This is Large ribosomal subunit protein bL19 from Hydrogenovibrio crunogenus (strain DSM 25203 / XCL-2) (Thiomicrospira crunogena).